The primary structure comprises 530 residues: Na(+)/H(+) antiporter NhaB (530 aa).

12 consecutive transmembrane segments (helical) span residues 13 to 33 (FLGKAPDWYKIAILSFLVINP), 34 to 54 (LVFFFVDPFTAGWLLVVEFIF), 90 to 110 (LVANIEVLLLLVFMVAGIYFM), 121 to 141 (ILIGIKSKTALSVAFCFTAAF), 145 to 165 (FLDALTVIAVVISVAVGFYAI), 205 to 225 (LLIHAGVGTALGGVMTMVGEP), 241 to 261 (FIIRMLPITAPVFICGILTCI), 306 to 326 (GLIAVWLIVGLALHLAAVGLI), 327 to 347 (GLSVIILATAFTGVIEEHSMG), 351 to 371 (EEALPFTALLAVFFAVVAVII), 455 to 475 (GQAAFLFLLTSALAPLIQLSY), and 481 to 501 (MALPYTIVLALVGMFGIIFFL).

Belongs to the NhaB Na(+)/H(+) (TC 2.A.34) antiporter family.

It localises to the cell inner membrane. It catalyses the reaction 2 Na(+)(in) + 3 H(+)(out) = 2 Na(+)(out) + 3 H(+)(in). Its function is as follows. Na(+)/H(+) antiporter that extrudes sodium in exchange for external protons. This chain is Na(+)/H(+) antiporter NhaB, found in Aliivibrio fischeri (strain MJ11) (Vibrio fischeri).